The following is a 122-amino-acid chain: uncharacterized protein (122 aa).

This is an uncharacterized protein from Human adenovirus F serotype 41 (HAdV-41).